The following is a 424-amino-acid chain: Putative fasciclin-like arabinogalactan protein 20 (424 aa).

A helical membrane pass occupies residues 46-66; it reads LLTTFFLIFFVLDIDLVATSM. In terms of domain architecture, FAS1 1 spans 56–194; it reads VLDIDLVATS…YVVIYGSDEF (139 aa). N-linked (GlcNAc...) asparagine glycans are attached at residues Asn153 and Asn160. Over residues 199–226 the composition is skewed to low complexity; that stretch reads TKISDDSSSSSSIPSTTSSTGSIPIPSS. The tract at residues 199 to 246 is disordered; it reads TKISDDSSSSSSIPSTTSSTGSIPIPSSATQTPPSPNIASDSTRNLPN. Over residues 227 to 246 the composition is skewed to polar residues; that stretch reads ATQTPPSPNIASDSTRNLPN. Residues Asn246, Asn283, and Asn287 are each glycosylated (N-linked (GlcNAc...) asparagine). The FAS1 2 domain maps to 250 to 384; sequence PVNRFNIFES…IAVHGFNQMI (135 aa). Residues 405–424 form a disordered region; it reads QEEEGVHGEYSSELGDYGLH.

This sequence belongs to the fasciclin-like AGP family.

It localises to the membrane. In terms of biological role, may be a cell surface adhesion protein. This is Putative fasciclin-like arabinogalactan protein 20 (FLA20) from Arabidopsis thaliana (Mouse-ear cress).